The following is a 284-amino-acid chain: Trimeric intracellular cation channel type B (284 aa).

At 1–15 (MESFSELSLQFSQLS) the chain is on the lumenal side. The chain crosses the membrane as a helical span at residues 16–32 (MFPFFETAHYLTSVMSA). The Cytoplasmic segment spans residues 33 to 44 (REQAGAVDVASR). Residues 45–68 (SPLASWFSSMLYCFGGGILSSILL) form a helical membrane-spanning segment. Over 69–79 (AEPPVGILSNT) the chain is Lumenal. A helical membrane pass occupies residues 80 to 99 (TSIILASAVWYMVYYFPYDL). Topologically, residues 100–102 (FYN) are cytoplasmic. The chain crosses the membrane as a helical span at residues 103-121 (CFFFLPIRLILAGMKEVTR). A 1,2-diacyl-sn-glycero-3-phospho-(1D-myo-inositol-4,5-bisphosphate) is bound by residues Lys117 and Arg121. The Lumenal portion of the chain corresponds to 122–139 (TWKILSGVAHAHSHYKDA). Residues 140-157 (MLVMITIGWARGAGGGLI) traverse the membrane as a helical segment. Residues 158–178 (SNFEQLVRGVWKPESNEFLKM) are Cytoplasmic-facing. A helical transmembrane segment spans residues 179-196 (SYPVKVTLIGAVLFTLQH). Topologically, residues 197-204 (GQYLPISR) are lumenal. Residues 205-225 (HNLMFIYTLFLILIKVTMMLT) traverse the membrane as a helical segment. The Cytoplasmic portion of the chain corresponds to 226–284 (RSTASPFLPLETSLQHILFSRQQIPAEVRESPSSSGDKGKPSKKTLDKDSGEQDNKKDN). The segment at 250–284 (PAEVRESPSSSGDKGKPSKKTLDKDSGEQDNKKDN) is disordered. The span at 262 to 284 (DKGKPSKKTLDKDSGEQDNKKDN) shows a compositional bias: basic and acidic residues.

It belongs to the TMEM38 family. In terms of assembly, homotrimer; conformation seems to be controled by binding to diacylglycerol (DAG).

The protein localises to the endoplasmic reticulum membrane. It catalyses the reaction K(+)(in) = K(+)(out). Its activity is regulated as follows. Channel activity is activated by increased cytosolic Ca(2+) levels and blocked by luminal high Ca(2+) levels. Functionally, intracellular monovalent cation channel required for maintenance of rapid intracellular calcium release. Acts as a potassium counter-ion channel that functions in synchronization with calcium release from intracellular stores. Activated by increased cytosolic Ca(2+) levels. The chain is Trimeric intracellular cation channel type B (tmem38b) from Xenopus tropicalis (Western clawed frog).